The following is a 684-amino-acid chain: Glycine--tRNA ligase beta subunit (684 aa).

The protein belongs to the class-II aminoacyl-tRNA synthetase family. As to quaternary structure, tetramer of two alpha and two beta subunits.

It is found in the cytoplasm. It carries out the reaction tRNA(Gly) + glycine + ATP = glycyl-tRNA(Gly) + AMP + diphosphate. This is Glycine--tRNA ligase beta subunit from Pseudomonas syringae pv. syringae (strain B728a).